The following is a 367-amino-acid chain: Ribosomal lysine N-methyltransferase 5 (367 aa).

The tract at residues 55-74 (EGGRKKKRVRRRNKASSVEE) is disordered. The span at 58–68 (RKKKRVRRRNK) shows a compositional bias: basic residues. Residues tryptophan 110, 170-172 (GAG), aspartate 192, tryptophan 256, and methionine 288 each bind S-adenosyl-L-methionine.

It belongs to the class I-like SAM-binding methyltransferase superfamily. RKM5 family.

Its function is as follows. S-adenosyl-L-methionine-dependent protein-lysine N-methyltransferase that monomethylates 60S ribosomal protein L1 (RPL1A and RPL1B) at 'Lys-46'. The sequence is that of Ribosomal lysine N-methyltransferase 5 (RKM5) from Saccharomyces cerevisiae (strain Lalvin EC1118 / Prise de mousse) (Baker's yeast).